Here is a 201-residue protein sequence, read N- to C-terminus: Inosine triphosphate pyrophosphatase (201 aa).

16-21 lines the ITP pocket; that stretch reads TGNAKK. Residue Glu44 participates in Mg(2+) binding. ITP contacts are provided by residues Lys56, 72–73, Lys89, 148–151, Lys171, and 176–177; these read DT, FGWD, and HR.

It belongs to the HAM1 NTPase family. Homodimer. The cofactor is Mg(2+). Requires Mn(2+) as cofactor.

Its subcellular location is the cytoplasm. It catalyses the reaction ITP + H2O = IMP + diphosphate + H(+). The enzyme catalyses dITP + H2O = dIMP + diphosphate + H(+). It carries out the reaction XTP + H2O = XMP + diphosphate + H(+). Its function is as follows. Pyrophosphatase that hydrolyzes non-canonical purine nucleotides such as inosine triphosphate (ITP), deoxyinosine triphosphate (dITP) or xanthosine 5'-triphosphate (XTP) to their respective monophosphate derivatives. The enzyme does not distinguish between the deoxy- and ribose forms. Probably excludes non-canonical purines from RNA and DNA precursor pools, thus preventing their incorporation into RNA and DNA and avoiding chromosomal lesions. The protein is Inosine triphosphate pyrophosphatase of Zea mays (Maize).